The chain runs to 856 residues: Rod cGMP-specific 3',5'-cyclic phosphodiesterase subunit beta (856 aa).

Residue S2 is modified to N-acetylserine. GAF domains follow at residues 71–220 and 252–429; these read NMER…TLNL and DIER…GWSV. Residues 481 to 814 enclose the PDEase domain; the sequence is EEDELGILLK…KEWKALADEY (334 aa). H557 (proton donor) is an active-site residue. H561, H597, D598, and D718 together coordinate a divalent metal cation. The segment covering 823 to 833 has biased composition (basic and acidic residues); sequence EEKQQQEDRTT. Residues 823-842 are disordered; that stretch reads EEKQQQEDRTTAKKAGTEIC. C853 is lipidated: S-geranylgeranyl cysteine. Positions 854 to 856 are cleaved as a propeptide — removed in mature form; the sequence is CIL.

The protein belongs to the cyclic nucleotide phosphodiesterase family. In terms of assembly, oligomer composed of two catalytic chains (alpha and beta), an inhibitory chain (gamma) and the delta chain. A divalent metal cation is required as a cofactor.

It localises to the membrane. The protein resides in the cell projection. The protein localises to the cilium. It is found in the photoreceptor outer segment. The catalysed reaction is 3',5'-cyclic GMP + H2O = GMP + H(+). Rod-specific cGMP phosphodiesterase that catalyzes the hydrolysis of 3',5'-cyclic GMP. Necessary for the formation of a functional phosphodiesterase holoenzyme. Involved in retinal circadian rhythm photoentrainment via modulation of UVA and orange light-induced phase-shift of the retina clock. May participate in processes of transmission and amplification of the visual signal. This is Rod cGMP-specific 3',5'-cyclic phosphodiesterase subunit beta from Canis lupus familiaris (Dog).